Consider the following 375-residue polypeptide: tRNA-specific 2-thiouridylase MnmA (375 aa).

ATP-binding positions include 18 to 25 (GMSGGVDS) and Met-44. Residues 104–106 (NPD) are interaction with target base in tRNA. Residue Cys-109 is the Nucleophile of the active site. A disulfide bond links Cys-109 and Cys-206. Gly-134 lines the ATP pocket. Residues 156 to 158 (KDQ) are interaction with tRNA. Cys-206 functions as the Cysteine persulfide intermediate in the catalytic mechanism. The tract at residues 318 to 319 (RY) is interaction with tRNA.

The protein belongs to the MnmA/TRMU family.

The protein localises to the cytoplasm. The enzyme catalyses S-sulfanyl-L-cysteinyl-[protein] + uridine(34) in tRNA + AH2 + ATP = 2-thiouridine(34) in tRNA + L-cysteinyl-[protein] + A + AMP + diphosphate + H(+). In terms of biological role, catalyzes the 2-thiolation of uridine at the wobble position (U34) of tRNA, leading to the formation of s(2)U34. This is tRNA-specific 2-thiouridylase MnmA from Colwellia psychrerythraea (strain 34H / ATCC BAA-681) (Vibrio psychroerythus).